The chain runs to 155 residues: 6,7-dimethyl-8-ribityllumazine synthase (155 aa).

Residues F23, 57–59, and 81–83 contribute to the 5-amino-6-(D-ribitylamino)uracil site; these read AFE and AVI. Residue 86 to 87 coordinates (2S)-2-hydroxy-3-oxobutyl phosphate; that stretch reads ST. The active-site Proton donor is the H89. F114 is a 5-amino-6-(D-ribitylamino)uracil binding site. R128 contributes to the (2S)-2-hydroxy-3-oxobutyl phosphate binding site.

This sequence belongs to the DMRL synthase family.

The catalysed reaction is (2S)-2-hydroxy-3-oxobutyl phosphate + 5-amino-6-(D-ribitylamino)uracil = 6,7-dimethyl-8-(1-D-ribityl)lumazine + phosphate + 2 H2O + H(+). Its pathway is cofactor biosynthesis; riboflavin biosynthesis; riboflavin from 2-hydroxy-3-oxobutyl phosphate and 5-amino-6-(D-ribitylamino)uracil: step 1/2. In terms of biological role, catalyzes the formation of 6,7-dimethyl-8-ribityllumazine by condensation of 5-amino-6-(D-ribitylamino)uracil with 3,4-dihydroxy-2-butanone 4-phosphate. This is the penultimate step in the biosynthesis of riboflavin. This Geobacter metallireducens (strain ATCC 53774 / DSM 7210 / GS-15) protein is 6,7-dimethyl-8-ribityllumazine synthase.